A 79-amino-acid chain; its full sequence is uncharacterized protein (79 aa).

This is an uncharacterized protein from Sulfolobus islandicus filamentous virus (isolate Iceland/Hveragerdi) (SIFV).